A 131-amino-acid chain; its full sequence is Ribonuclease VapC42 (131 aa).

The PINc domain maps to 1-125 (MIVDTSAIVA…FRGDDFTHTD (125 aa)). Residues aspartate 4 and aspartate 100 each coordinate Mg(2+).

This sequence belongs to the PINc/VapC protein family. It depends on Mg(2+) as a cofactor.

Toxic component of a type II toxin-antitoxin (TA) system. An RNase. Its cognate antitoxin is VapB42. The chain is Ribonuclease VapC42 from Mycobacterium tuberculosis (strain CDC 1551 / Oshkosh).